The following is a 449-amino-acid chain: Trigger factor (449 aa).

Positions 169–254 (GDRITVDFVG…AKQVEAPGEL (86 aa)) constitute a PPIase FKBP-type domain.

The protein belongs to the FKBP-type PPIase family. Tig subfamily.

The protein resides in the cytoplasm. The catalysed reaction is [protein]-peptidylproline (omega=180) = [protein]-peptidylproline (omega=0). Its function is as follows. Involved in protein export. Acts as a chaperone by maintaining the newly synthesized protein in an open conformation. Functions as a peptidyl-prolyl cis-trans isomerase. The chain is Trigger factor from Azorhizobium caulinodans (strain ATCC 43989 / DSM 5975 / JCM 20966 / LMG 6465 / NBRC 14845 / NCIMB 13405 / ORS 571).